The sequence spans 577 residues: Arginine--tRNA ligase (577 aa).

The 'HIGH' region signature appears at 122–132 (PNVAKEMHVGH).

It belongs to the class-I aminoacyl-tRNA synthetase family. In terms of assembly, monomer.

Its subcellular location is the cytoplasm. It carries out the reaction tRNA(Arg) + L-arginine + ATP = L-arginyl-tRNA(Arg) + AMP + diphosphate. In Escherichia fergusonii (strain ATCC 35469 / DSM 13698 / CCUG 18766 / IAM 14443 / JCM 21226 / LMG 7866 / NBRC 102419 / NCTC 12128 / CDC 0568-73), this protein is Arginine--tRNA ligase.